Consider the following 465-residue polypeptide: Chromosomal replication initiator protein DnaA (465 aa).

A domain I, interacts with DnaA modulators region spans residues 1–84 (MSLSLWQQCL…RFEVGSKPLV (84 aa)). Residues 84 to 128 (VQAISQPAQPHHKQVSAAPQQQVRSAPVRPSWDNSPAQAEHTYRS) form a domain II region. Residues 91 to 120 (AQPHHKQVSAAPQQQVRSAPVRPSWDNSPA) are disordered. Residues 129–345 (NVNPKHTFDN…GALNRVIANA (217 aa)) are domain III, AAA+ region. The ATP site is built by G173, G175, K176, and T177. The tract at residues 346–465 (NFTGRSITID…FSNLIRTLSS (120 aa)) is domain IV, binds dsDNA.

It belongs to the DnaA family. As to quaternary structure, oligomerizes as a right-handed, spiral filament on DNA at oriC.

The protein resides in the cytoplasm. Functionally, plays an essential role in the initiation and regulation of chromosomal replication. ATP-DnaA binds to the origin of replication (oriC) to initiate formation of the DNA replication initiation complex once per cell cycle. Binds the DnaA box (a 9 base pair repeat at the origin) and separates the double-stranded (ds)DNA. Forms a right-handed helical filament on oriC DNA; dsDNA binds to the exterior of the filament while single-stranded (ss)DNA is stabiized in the filament's interior. The ATP-DnaA-oriC complex binds and stabilizes one strand of the AT-rich DNA unwinding element (DUE), permitting loading of DNA polymerase. After initiation quickly degrades to an ADP-DnaA complex that is not apt for DNA replication. Binds acidic phospholipids. The protein is Chromosomal replication initiator protein DnaA of Pectobacterium carotovorum subsp. carotovorum (strain PC1).